The sequence spans 172 residues: Transcriptional repressor NrdR (172 aa).

A zinc finger lies at 3–34 (CPFCGAPDTRVIDSRLAGEGDQVRRRRECLSC). The region spanning 49–139 (PRVVKRDGSR…VYLSFADVQA (91 aa)) is the ATP-cone domain.

It belongs to the NrdR family. Requires Zn(2+) as cofactor.

Negatively regulates transcription of bacterial ribonucleotide reductase nrd genes and operons by binding to NrdR-boxes. The polypeptide is Transcriptional repressor NrdR (Thioalkalivibrio sulfidiphilus (strain HL-EbGR7)).